Consider the following 2025-residue polypeptide: Pericentriolar material 1 protein (2025 aa).

Residues Met1–Gln91 form a disordered region. Position 2 is an N-acetylalanine (Ala2). The segment at Ala2–Thr1458 is mediates interaction with DZIP1. 8 positions are modified to phosphoserine: Ser65, Ser68, Ser69, Ser93, Ser110, Ser116, Ser119, and Ser159. Residues Asp111–Pro140 are disordered. Residues Ser116–Arg132 show a composition bias toward polar residues. The stretch at Lys218–Ala301 forms a coiled coil. Residues Arg354–Pro390 form a disordered region. The segment covering Glu369–Val385 has biased composition (polar residues). Position 370 is a phosphoserine (Ser370). Position 372 is a phosphoserine; by PLK4 (Ser372). Ser384 carries the post-translational modification Phosphoserine. The residue at position 399 (Lys399) is an N6-acetyllysine. Coiled-coil stretches lie at residues Lys399–Asn426 and Ala492–Thr518. 2 disordered regions span residues Glu528 to Ile553 and Val565 to Asn586. The span at Lys531–Tyr540 shows a compositional bias: acidic residues. The residue at position 593 (Ser593) is a Phosphoserine. Residues Ala620–Glu654 form a disordered region. A compositionally biased stretch (acidic residues) spans Glu623–Gly633. Residues Val634–Ser644 are compositionally biased toward low complexity. Ser644 is modified (phosphoserine). 2 coiled-coil regions span residues Glu652–Gln772 and Ser822–Glu856. Thr857 carries the phosphothreonine modification. Ser859, Ser864, Ser867, and Ser870 each carry phosphoserine. Disordered regions lie at residues Arg866–Met885 and Thr913–Ser940. Residues Ser870–Ser879 are compositionally biased toward polar residues. Phosphothreonine is present on Thr875. Ser957, Ser974, Ser985, and Ser988 each carry phosphoserine. Coiled coils occupy residues Ser985–Leu1017 and Gln1061–His1086. Disordered stretches follow at residues Arg1081–Pro1105 and Phe1149–Glu1213. A compositionally biased stretch (basic and acidic residues) spans His1086 to Gly1096. The span at Phe1149–Gly1169 shows a compositional bias: polar residues. Phosphoserine is present on residues Ser1182 and Ser1185. The span at Glu1189–Glu1198 shows a compositional bias: basic and acidic residues. Ser1228, Ser1254, Ser1257, Ser1259, and Ser1260 each carry phosphoserine. The tract at residues Glu1230 to Asn1310 is disordered. The segment covering Thr1268–Leu1285 has biased composition (polar residues). Residues Ser1315 and Ser1317 each carry the phosphoserine modification. The disordered stretch occupies residues Ser1319–Pro1338. Thr1466 is subject to Phosphothreonine. Phosphoserine is present on residues Ser1571, Ser1695, Ser1729, Ser1766, Ser1769, Ser1777, and Ser1783. Residues Lys1720–Val1943 form a disordered region. Positions Tyr1756–Val1768 are enriched in basic and acidic residues. The segment covering Ile1784–Gly1798 has biased composition (polar residues). Residues Gly1800–Pro1816 show a composition bias toward acidic residues. Composition is skewed to polar residues over residues Asp1818 to Glu1828, Glu1849 to Glu1858, Glu1879 to Gln1901, and Ala1925 to Ala1934. Phosphoserine is present on residues Ser1959 and Ser1978.

Belongs to the PCM1 family. In terms of assembly, self-associates. Interacts with BBS4, BBS8, CETN3, HAP1, NDE1, NDEL1, MAP1LC3B, GABARAPAL2, and GABARAP. Interacts with CEP131; the interaction increases in response to ultraviolet light (UV) radiation. Associates with microtubule; association to microtubule is reduced in response to cellular stress, such as ultraviolet light (UV) radiation or heat shock, in a process that requires p38 MAP kinase signaling. Interacts with C2CD3. Interacts with CFAP263. Interacts with SSX2IP. Interacts with CCDC13. Interacts with CEP290. Interacts with PARD6A. Interacts with KIAA0753/OFIP, CEP20/FOR20 and OFD1; the interaction with CEP20/FOR20 and OFD1 may be mediated by KIAA0753/OFIP. Interacts with CCDC66. Interacts with CCDC61. Interacts with DZIP1; localizes DZIP1 and the associated BBSome to centriolar satellite. Interacts with CSTPP1, TTLL1, TPGS1 and LRRC49. Interacts with CFAP53. In terms of processing, ubiquitinated. Undergoes monoubiquitination catalyzed by the E3 ubiquitin-protein ligase MIB1 in proliferating cells, preventing cilia formation. Monoubiquitination by MIB1 is inhibited in response to cellular stress, such as ultraviolet light (UV) radiation or heat shock, resulting in cilia formation initiation. Post-translationally, phosphorylated on multiple serine and threonine residues by DYRK3 during the G2-to-M transition, after the nuclear-envelope breakdown. Phosphorylation by DYRK3 promotes disassembly of pericentriolar material. Phosphorylation at Ser-372 mediated by PLK4 is required to maintain the integrity of centriolar satellites. In terms of tissue distribution, expressed in the hippocampus and dentate gyrus, the columnar epithelial cells of bronchioles, the olfactory epithelium, the pericardium and the inner segment of the retina.

It localises to the cytoplasm. The protein localises to the cytoskeleton. Its subcellular location is the microtubule organizing center. It is found in the centrosome. The protein resides in the cytoplasmic granule. It localises to the centriolar satellite. The protein localises to the cilium basal body. Required for centrosome assembly and function. Essential for the correct localization of several centrosomal proteins including CEP250, CETN3, PCNT and NEK2. Required to anchor microtubules to the centrosome. Also involved in cilium biogenesis by recruiting the BBSome, a ciliary protein complex involved in cilium biogenesis, to the centriolar satellites. Recruits the tubulin polyglutamylase complex (TPGC) to centriolar satellites. The protein is Pericentriolar material 1 protein of Mus musculus (Mouse).